The following is a 144-amino-acid chain: Small ribosomal subunit protein bS6 (144 aa).

Residues E95–E144 are disordered. Over residues K107–E144 the composition is skewed to basic and acidic residues.

The protein belongs to the bacterial ribosomal protein bS6 family.

Binds together with bS18 to 16S ribosomal RNA. This chain is Small ribosomal subunit protein bS6, found in Paramagnetospirillum magneticum (strain ATCC 700264 / AMB-1) (Magnetospirillum magneticum).